Here is a 1157-residue protein sequence, read N- to C-terminus: Hephaestin (1157 aa).

The signal sequence occupies residues 1–18; it reads MKAGHLLWALLLMHSLWS. The Extracellular portion of the chain corresponds to 19-1109; sequence IPTDGAIRNY…PIKDVEILSS (1091 aa). Plastocyanin-like domains lie at 24–206, 218–366, 370–559, 569–717, 730–902, and 910–1066; these read AIRN…LITC, QRKD…VDSC, PPVD…LLVC, KQKG…VSQC, ASRV…LVIC, and NGGR…SHEE. Residues asparagine 49 and asparagine 54 are each glycosylated (N-linked (GlcNAc...) asparagine). Residues glycine 70 and tyrosine 73 each contribute to the Na(+) site. 2 residues coordinate Cu(2+): histidine 126 and histidine 128. Residue histidine 126 participates in O2 binding. Residues lysine 134, aspartate 152, and aspartate 153 each contribute to the Ca(2+) site. An N-linked (GlcNAc...) asparagine glycan is attached at asparagine 164. A disulfide bridge connects residues cysteine 180 and cysteine 206. Cu(2+)-binding residues include histidine 186 and histidine 188. An O2-binding site is contributed by histidine 186. Asparagine 236 carries N-linked (GlcNAc...) asparagine glycosylation. Na(+) is bound at residue serine 265. Cysteine 285 and cysteine 366 are joined by a disulfide. Cu(2+) is bound by residues histidine 304, cysteine 347, and histidine 352. Na(+) is bound by residues tyrosine 416, glycine 425, and tyrosine 428. A disulfide bridge connects residues cysteine 533 and cysteine 559. Asparagine 587 is a glycosylation site (N-linked (GlcNAc...) asparagine). A Na(+)-binding site is contributed by serine 616. Cysteines 636 and 717 form a disulfide. Cu(2+)-binding residues include histidine 655, cysteine 698, histidine 703, and methionine 708. Residues asparagine 713 and asparagine 757 are each glycosylated (N-linked (GlcNAc...) asparagine). 2 residues coordinate Na(+): phenylalanine 768 and glycine 777. Cysteines 876 and 902 form a disulfide. Asparagine 930 is a glycosylation site (N-linked (GlcNAc...) asparagine). Cu(2+) is bound by residues histidine 999, histidine 1002, histidine 1004, histidine 1044, cysteine 1045, histidine 1046, histidine 1050, and methionine 1055. 2 residues coordinate O2: histidine 1002 and histidine 1004. Histidine 1046 serves as a coordination point for O2. A helical transmembrane segment spans residues 1110–1130; it reads ALIAICVLLLLIALALGGVVW. Topologically, residues 1131–1157 are cytoplasmic; the sequence is YQHRQRKLRRNRRSILDDSFKLLSLKQ. Residues serine 1144, serine 1149, and serine 1154 each carry the phosphoserine modification.

It belongs to the multicopper oxidase family. Part of a complex composed of SLC40A1/ferroportin, TF/transferrin and HEPH/hephaestin that transfers iron from cells to transferrin. The cofactor is Cu cation.

Its subcellular location is the basolateral cell membrane. The enzyme catalyses 4 Fe(2+) + O2 + 4 H(+) = 4 Fe(3+) + 2 H2O. Functionally, plasma membrane ferroxidase that mediates the extracellular conversion of ferrous/Fe(2+) iron into its ferric/Fe(3+) form. Couples ferroportin which specifically exports ferrous/Fe(2+) iron from cells to transferrin that only binds and shuttles extracellular ferric/Fe(3+) iron throughout the body. By helping iron transfer from cells to blood mainly contributes to dietary iron absorption by the intestinal epithelium and more generally regulates iron levels in the body. This chain is Hephaestin, found in Mus musculus (Mouse).